Consider the following 331-residue polypeptide: Probable allantoicase (331 aa).

Belongs to the allantoicase family.

It carries out the reaction allantoate + H2O = (S)-ureidoglycolate + urea. It functions in the pathway nitrogen metabolism; (S)-allantoin degradation; (S)-ureidoglycolate from allantoate (aminidohydrolase route): step 1/1. The chain is Probable allantoicase from Pseudomonas syringae pv. syringae (strain B728a).